Reading from the N-terminus, the 3046-residue chain is Nucleosome-remodeling factor subunit BPTF (3046 aa).

The interval M1–S232 is disordered. Residues P22–S33 are compositionally biased toward pro residues. Low complexity predominate over residues T62 to S72. A compositionally biased stretch (pro residues) spans P78–T87. Residues G91–H110 are compositionally biased toward gly residues. Over residues H129 to A186 the composition is skewed to acidic residues. The segment covering T190–T203 has biased composition (low complexity). Residues G205–R215 show a composition bias toward basic residues. Position 216 is a phosphoserine (S216). The region spanning N240–T300 is the DDT domain. A PHD-type 1 zinc finger spans residues D390–H437. 2 stretches are compositionally biased toward basic and acidic residues: residues I567–K609 and E616–D628. Residues I567–T774 are disordered. Residue S572 is modified to Phosphoserine. The stretch at E574–K604 forms a coiled coil. Composition is skewed to polar residues over residues N631–E653 and T690–P705. The interval N640–G749 is interaction with KEAP1. Residues N706–S723 are compositionally biased toward low complexity. The span at K725–H738 shows a compositional bias: basic and acidic residues. 2 positions are modified to phosphoserine: S763 and S817. The segment at Y839–F921 is interaction with MAZ. An N6-acetyllysine modification is found at K880. A coiled-coil region spans residues M978–W1007. A disordered region spans residues Y1057–Q1157. T1064 bears the Phosphothreonine mark. Composition is skewed to basic and acidic residues over residues I1087–D1102 and D1113–S1152. Glycyl lysine isopeptide (Lys-Gly) (interchain with G-Cter in SUMO2) cross-links involve residues K1088, K1138, and K1209. 4 disordered regions span residues K1215–F1339, I1371–R1448, G1465–D1537, and N1605–K1706. 3 stretches are compositionally biased toward polar residues: residues T1220–P1232, Q1242–D1257, and C1266–K1285. S1231 is subject to Phosphoserine. The span at Y1287–C1305 shows a compositional bias: basic and acidic residues. S1300 carries the post-translational modification Phosphoserine. T1303 is subject to Phosphothreonine. Residue S1310 is modified to Phosphoserine. Residues V1372–S1386 show a composition bias toward low complexity. Composition is skewed to polar residues over residues S1409–D1426 and V1434–Q1444. Positions K1491–G1525 are enriched in basic and acidic residues. The span at T1629–Q1656 shows a compositional bias: polar residues. Residue K1730 forms a Glycyl lysine isopeptide (Lys-Gly) (interchain with G-Cter in SUMO2) linkage. Disordered stretches follow at residues V1973–Q2003 and Q2041–S2070. Residues E2022–K2050 are a coiled coil. Residues I2054–S2070 show a composition bias toward low complexity. S2098 bears the Phosphoserine mark. An Omega-N-methylarginine modification is found at R2155. Positions T2160–G2180 are disordered. R2162, R2184, and R2191 each carry asymmetric dimethylarginine. Over residues V2232 to I2256 the composition is skewed to polar residues. Disordered regions lie at residues V2232 to Q2270, T2346 to L2549, Q2714 to N2733, and P2795 to T2858. 2 stretches are compositionally biased toward low complexity: residues Q2257–Q2270 and T2346–G2362. Polar residues predominate over residues E2363–V2375. A compositionally biased stretch (low complexity) spans P2391–V2431. Positions S2432–L2485 are enriched in polar residues. A Phosphoserine modification is found at S2465. Over residues S2486–Q2538 the composition is skewed to low complexity. Residues D2706–Q2732 adopt a coiled-coil conformation. The span at Q2714–R2729 shows a compositional bias: basic and acidic residues. Over residues P2795–A2818 the composition is skewed to pro residues. Over residues K2838–S2847 the composition is skewed to basic and acidic residues. The segment at K2867–T2918 adopts a PHD-type 2 zinc-finger fold. Residues P2927–F3031 enclose the Bromo domain.

The protein belongs to the PBTF family. In terms of assembly, interacts with MAZ. Interacts with KEAP1. Component of the NURF-1 ISWI chromatin remodeling complex (also called the nucleosome-remodeling factor (NURF) complex) at least composed of SMARCA1 (isoform 2), BPTF, RBBP4 and RBBP7. Within the complex interacts with isoform 2 of SMARCA1. Component of the BPFT-SMARCA1 complex at least composed of SMARCA1 (isoform 1), BPFT, RBBP4 and RBBP7; the complex is catalytically inactive and does not remodel chromatin. Within the complex interacts with isoform 1 of SMARCA1. Component of the NURF-5 ISWI chromatin remodeling complex at least composed of SMARCA5/SNF2H and BPTF. Within NURF-5 ISWI chromatin remodeling complex interacts with SMARCA5/SNF2H. Phosphorylation enhances DNA-binding. Post-translationally, highly susceptible to proteolysis. As to expression, ubiquitously expressed, with highest levels in testis. Present in kidney, liver and brain. In the brain, highest levels are found in motor cortex (at protein level).

The protein localises to the cytoplasm. It is found in the nucleus. Its function is as follows. Regulatory subunit of the ATP-dependent NURF-1 and NURF-5 ISWI chromatin remodeling complexes, which form ordered nucleosome arrays on chromatin and facilitate access to DNA during DNA-templated processes such as DNA replication, transcription, and repair. The NURF-1 ISWI chromatin remodeling complex has a lower ATP hydrolysis rate than the NURF-5 ISWI chromatin remodeling complex. Within the NURF-1 ISWI chromatin-remodeling complex, binds to the promoters of En1 and En2 to positively regulate their expression and promote brain development. Histone-binding protein which binds to H3 tails trimethylated on 'Lys-4' (H3K4me3), which mark transcription start sites of active genes. Binds to histone H3 tails dimethylated on 'Lys-4' (H3K4Me2) to a lesser extent. May also regulate transcription through direct binding to DNA or transcription factors. In Homo sapiens (Human), this protein is Nucleosome-remodeling factor subunit BPTF (BPTF).